Consider the following 434-residue polypeptide: Homogentisate 1,2-dioxygenase (434 aa).

Histidine 289 serves as the catalytic Proton acceptor. Fe cation-binding residues include histidine 332 and glutamate 338. Positions 347 and 368 each coordinate homogentisate. A Fe cation-binding site is contributed by histidine 368.

It belongs to the homogentisate dioxygenase family. As to quaternary structure, hexamer; dimer of trimers. Fe cation serves as cofactor.

The enzyme catalyses homogentisate + O2 = 4-maleylacetoacetate + H(+). The protein operates within amino-acid degradation; L-phenylalanine degradation; acetoacetate and fumarate from L-phenylalanine: step 4/6. Its function is as follows. Involved in the catabolism of homogentisate (2,5-dihydroxyphenylacetate or 2,5-OH-PhAc), a central intermediate in the degradation of phenylalanine and tyrosine. Catalyzes the oxidative ring cleavage of the aromatic ring of homogentisate to yield maleylacetoacetate. The sequence is that of Homogentisate 1,2-dioxygenase from Pseudomonas syringae pv. tomato (strain ATCC BAA-871 / DC3000).